The chain runs to 1332 residues: Aldehyde oxidase 1 (1332 aa).

The 2Fe-2S ferredoxin-type domain maps to 4-91 (STLYFYVNGR…GAAVTTVEGV (88 aa)). The [2Fe-2S] cluster site is built by cysteine 43, cysteine 48, cysteine 51, and cysteine 73. A Mo-molybdopterin-binding site is contributed by glutamine 112. Cysteine 113, cysteine 116, cysteine 148, and cysteine 150 together coordinate [2Fe-2S] cluster. Cysteine 150 contacts Mo-molybdopterin. In terms of domain architecture, FAD-binding PCMH-type spans 234–419 (FTGDRVTWIS…LSVTIPYSRK (186 aa)). FAD-binding positions include 262-269 (VVMGNTSV), alanine 343, serine 352, histidine 356, aspartate 365, and leucine 409. Mo-molybdopterin is bound by residues 800 to 801 (AF), methionine 1041, 1082 to 1085 (GSVV), glutamine 1197, and leucine 1262. The Proton acceptor; for azaheterocycle hydroxylase activity role is filled by glutamate 1264.

Belongs to the xanthine dehydrogenase family. In terms of assembly, homodimer. [2Fe-2S] cluster is required as a cofactor. Requires FAD as cofactor. The cofactor is Mo-molybdopterin. In terms of tissue distribution, expressed in liver.

The protein resides in the cytoplasm. It carries out the reaction an aldehyde + O2 + H2O = a carboxylate + H2O2 + H(+). The enzyme catalyses retinal + O2 + H2O = retinoate + H2O2 + H(+). Its activity is regulated as follows. Inhibited by menadione and isovanillin. Not inhibited by allopurinol, a xanthine dehydrogenase potent inhibitor. In terms of biological role, oxidase with broad substrate specificity, oxidizing aromatic azaheterocycles, such as N1-methylnicotinamide, N-methylphthalazinium and phthalazine, as well as aldehydes, such as benzaldehyde, retinal, pyridoxal, and vanillin. Plays a key role in the metabolism of xenobiotics and drugs containing aromatic azaheterocyclic substituents. Participates in the bioactivation of prodrugs such as famciclovir, catalyzing the oxidation step from 6-deoxypenciclovir to penciclovir, which is a potent antiviral agent. Is probably involved in the regulation of reactive oxygen species homeostasis. May be a prominent source of superoxide generation via the one-electron reduction of molecular oxygen. May also catalyze nitric oxide (NO) production via the reduction of nitrite to NO with NADH or aldehyde as electron donor. May play a role in adipogenesis. The polypeptide is Aldehyde oxidase 1 (Cavia porcellus (Guinea pig)).